Reading from the N-terminus, the 490-residue chain is Ketol-acid reductoisomerase (NADP(+)) (490 aa).

One can recognise a KARI N-terminal Rossmann domain in the interval 18–208; the sequence is AKCRFMDSSE…GGHKAGVLMS (191 aa). NADP(+)-binding positions include 45 to 48, Arg-68, Arg-76, Ser-78, and 108 to 110; these read CGAQ and DKQ. The active site involves His-132. Gly-158 contacts NADP(+). 2 KARI C-terminal knotted domains span residues 209–344 and 345–486; these read SFIA…KTPA and GDVE…MADM. Mg(2+)-binding residues include Asp-217, Glu-221, Glu-389, and Glu-393. Residue Ser-414 coordinates substrate.

This sequence belongs to the ketol-acid reductoisomerase family. It depends on Mg(2+) as a cofactor.

The enzyme catalyses (2R)-2,3-dihydroxy-3-methylbutanoate + NADP(+) = (2S)-2-acetolactate + NADPH + H(+). It carries out the reaction (2R,3R)-2,3-dihydroxy-3-methylpentanoate + NADP(+) = (S)-2-ethyl-2-hydroxy-3-oxobutanoate + NADPH + H(+). It participates in amino-acid biosynthesis; L-isoleucine biosynthesis; L-isoleucine from 2-oxobutanoate: step 2/4. Its pathway is amino-acid biosynthesis; L-valine biosynthesis; L-valine from pyruvate: step 2/4. Functionally, involved in the biosynthesis of branched-chain amino acids (BCAA). Catalyzes an alkyl-migration followed by a ketol-acid reduction of (S)-2-acetolactate (S2AL) to yield (R)-2,3-dihydroxy-isovalerate. In the isomerase reaction, S2AL is rearranged via a Mg-dependent methyl migration to produce 3-hydroxy-3-methyl-2-ketobutyrate (HMKB). In the reductase reaction, this 2-ketoacid undergoes a metal-dependent reduction by NADPH to yield (R)-2,3-dihydroxy-isovalerate. In Marinomonas sp. (strain MWYL1), this protein is Ketol-acid reductoisomerase (NADP(+)).